Reading from the N-terminus, the 175-residue chain is ATP synthase subunit b (175 aa).

A helical transmembrane segment spans residues 24 to 44 (LVLWQIAATVILIIVVRIFLW).

It belongs to the ATPase B chain family. As to quaternary structure, F-type ATPases have 2 components, F(1) - the catalytic core - and F(0) - the membrane proton channel. F(1) has five subunits: alpha(3), beta(3), gamma(1), delta(1), epsilon(1). F(0) has three main subunits: a(1), b(2) and c(10-14). The alpha and beta chains form an alternating ring which encloses part of the gamma chain. F(1) is attached to F(0) by a central stalk formed by the gamma and epsilon chains, while a peripheral stalk is formed by the delta and b chains.

Its subcellular location is the cell membrane. In terms of biological role, f(1)F(0) ATP synthase produces ATP from ADP in the presence of a proton or sodium gradient. F-type ATPases consist of two structural domains, F(1) containing the extramembraneous catalytic core and F(0) containing the membrane proton channel, linked together by a central stalk and a peripheral stalk. During catalysis, ATP synthesis in the catalytic domain of F(1) is coupled via a rotary mechanism of the central stalk subunits to proton translocation. Component of the F(0) channel, it forms part of the peripheral stalk, linking F(1) to F(0). This is ATP synthase subunit b from Acholeplasma laidlawii (strain PG-8A).